The chain runs to 362 residues: F-box protein At1g54550 (362 aa).

Positions 1 to 47 (MATVTDLPDDLVREIFSRVPLTSLRAVRSTCKKWNAISKYDILGKKA) constitute an F-box domain.

In Arabidopsis thaliana (Mouse-ear cress), this protein is F-box protein At1g54550.